Consider the following 552-residue polypeptide: Glutamine--tRNA ligase (552 aa).

The 'HIGH' region signature appears at 34-44; that stretch reads PEPNGYLHIGH. ATP-binding positions include 35 to 37 and 41 to 47; these read EPN and HIGHAKS. L-glutamine contacts are provided by D67 and Y212. ATP contacts are provided by residues T231, 261–262, and 269–271; these read RL and MSK. Positions 268-272 match the 'KMSKS' region motif; that stretch reads LMSKR.

The protein belongs to the class-I aminoacyl-tRNA synthetase family. Monomer.

The protein resides in the cytoplasm. It catalyses the reaction tRNA(Gln) + L-glutamine + ATP = L-glutaminyl-tRNA(Gln) + AMP + diphosphate. The chain is Glutamine--tRNA ligase from Hamiltonella defensa subsp. Acyrthosiphon pisum (strain 5AT).